The sequence spans 105 residues: Met repressor (105 aa).

The protein belongs to the MetJ family. In terms of assembly, homodimer.

The protein resides in the cytoplasm. Its function is as follows. This regulatory protein, when combined with SAM (S-adenosylmethionine) represses the expression of the methionine regulon and of enzymes involved in SAM synthesis. This is Met repressor from Citrobacter koseri (strain ATCC BAA-895 / CDC 4225-83 / SGSC4696).